Reading from the N-terminus, the 185-residue chain is Anaphase-promoting complex subunit 10 (185 aa).

Thr2 carries the N-acetylthreonine modification. The region spanning 2–185 is the DOC domain; it reads TTPNKTPPGA…IDFMMYRSIR (184 aa). An N6-acetyllysine modification is found at Lys169.

Belongs to the APC10 family. As to quaternary structure, the mammalian APC/C is composed at least of 14 distinct subunits ANAPC1, ANAPC2, CDC27/APC3, ANAPC4, ANAPC5, CDC16/APC6, ANAPC7, CDC23/APC8, ANAPC10, ANAPC11, CDC26/APC12, ANAPC13, ANAPC15 and ANAPC16 that assemble into a complex of at least 19 chains with a combined molecular mass of around 1.2 MDa; APC/C interacts with FZR1 and FBXO5. The C-terminus of APC10 binds to CDC27/APC3. Interacts with PIWIL1; interaction only takes place when PIWIL1 binds piRNA. Interacts with FBXO43; the interaction is direct.

It participates in protein modification; protein ubiquitination. In terms of biological role, component of the anaphase promoting complex/cyclosome (APC/C), a cell cycle-regulated E3 ubiquitin ligase that controls progression through mitosis and the G1 phase of the cell cycle. The APC/C complex acts by mediating ubiquitination and subsequent degradation of target proteins: it mainly mediates the formation of 'Lys-11'-linked polyubiquitin chains and, to a lower extent, the formation of 'Lys-48'- and 'Lys-63'-linked polyubiquitin chains. The APC/C complex catalyzes assembly of branched 'Lys-11'-/'Lys-48'-linked branched ubiquitin chains on target proteins. This chain is Anaphase-promoting complex subunit 10 (Anapc10), found in Mus musculus (Mouse).